Consider the following 105-residue polypeptide: Pyrimidine/purine nucleoside phosphorylase (105 aa).

Belongs to the nucleoside phosphorylase PpnP family.

The catalysed reaction is a purine D-ribonucleoside + phosphate = a purine nucleobase + alpha-D-ribose 1-phosphate. It carries out the reaction adenosine + phosphate = alpha-D-ribose 1-phosphate + adenine. The enzyme catalyses cytidine + phosphate = cytosine + alpha-D-ribose 1-phosphate. It catalyses the reaction guanosine + phosphate = alpha-D-ribose 1-phosphate + guanine. The catalysed reaction is inosine + phosphate = alpha-D-ribose 1-phosphate + hypoxanthine. It carries out the reaction thymidine + phosphate = 2-deoxy-alpha-D-ribose 1-phosphate + thymine. The enzyme catalyses uridine + phosphate = alpha-D-ribose 1-phosphate + uracil. It catalyses the reaction xanthosine + phosphate = alpha-D-ribose 1-phosphate + xanthine. Functionally, catalyzes the phosphorolysis of diverse nucleosides, yielding D-ribose 1-phosphate and the respective free bases. Can use uridine, adenosine, guanosine, cytidine, thymidine, inosine and xanthosine as substrates. Also catalyzes the reverse reactions. The polypeptide is Pyrimidine/purine nucleoside phosphorylase (Paracidovorax citrulli (strain AAC00-1) (Acidovorax citrulli)).